We begin with the raw amino-acid sequence, 144 residues long: 3-dehydroquinate dehydratase (144 aa).

Y22 functions as the Proton acceptor in the catalytic mechanism. The substrate site is built by N71, H77, and D84. Residue H97 is the Proton donor of the active site. Residues 98 to 99 and R108 contribute to the substrate site; that span reads IS.

The protein belongs to the type-II 3-dehydroquinase family. As to quaternary structure, homododecamer.

The catalysed reaction is 3-dehydroquinate = 3-dehydroshikimate + H2O. It functions in the pathway metabolic intermediate biosynthesis; chorismate biosynthesis; chorismate from D-erythrose 4-phosphate and phosphoenolpyruvate: step 3/7. Its function is as follows. Catalyzes a trans-dehydration via an enolate intermediate. In Thermotoga maritima (strain ATCC 43589 / DSM 3109 / JCM 10099 / NBRC 100826 / MSB8), this protein is 3-dehydroquinate dehydratase (aroQ).